A 158-amino-acid polypeptide reads, in one-letter code: Cyclic pyranopterin monophosphate synthase (158 aa).

Substrate-binding positions include 75 to 77 and 113 to 114; these read LCH and ME. Residue aspartate 128 is part of the active site.

This sequence belongs to the MoaC family. As to quaternary structure, homohexamer; trimer of dimers.

The catalysed reaction is (8S)-3',8-cyclo-7,8-dihydroguanosine 5'-triphosphate = cyclic pyranopterin phosphate + diphosphate. It participates in cofactor biosynthesis; molybdopterin biosynthesis. Its function is as follows. Catalyzes the conversion of (8S)-3',8-cyclo-7,8-dihydroguanosine 5'-triphosphate to cyclic pyranopterin monophosphate (cPMP). In Ralstonia nicotianae (strain ATCC BAA-1114 / GMI1000) (Ralstonia solanacearum), this protein is Cyclic pyranopterin monophosphate synthase.